The sequence spans 364 residues: O-methyltransferase 1 (364 aa).

Residues Ser-183, Gly-207, Asp-230, Asp-250, and Lys-264 each coordinate S-adenosyl-L-homocysteine. Asp-230 is a binding site for S-adenosyl-L-methionine. His-268 (proton acceptor) is an active-site residue.

It belongs to the class I-like SAM-binding methyltransferase superfamily. Cation-independent O-methyltransferase family. In terms of assembly, homodimer.

It catalyses the reaction dopamine + S-adenosyl-L-methionine = 3-methoxytyramine + S-adenosyl-L-homocysteine + H(+). The catalysed reaction is 3,4-dihydroxy-5-methoxyphenethylamine + S-adenosyl-L-methionine = 4-hydroxy-3,5-dimethoxyphenethylamine + S-adenosyl-L-homocysteine + H(+). The protein operates within aromatic compound metabolism. It participates in alkaloid biosynthesis. Functionally, O-methyltransferase participating in the biosynthesis of natural products derived from phenylethylamine, including mescaline, a natural hallucinogen potentially used in psychotherapeutic treatments. Catalyzes the O-methylation of mescaline meta hydroxyl groups, using dopamine and 3,4-dihydroxy-5-methoxyphenethylamine as substrates. This Lophophora williamsii (Peyote) protein is O-methyltransferase 1.